The chain runs to 135 residues: D-ribose pyranase (135 aa).

H20 functions as the Proton donor in the catalytic mechanism. Residues D28, H102, and 124–126 each bind substrate; that span reads YSN.

The protein belongs to the RbsD / FucU family. RbsD subfamily. As to quaternary structure, homodecamer.

It is found in the cytoplasm. The enzyme catalyses beta-D-ribopyranose = beta-D-ribofuranose. Its pathway is carbohydrate metabolism; D-ribose degradation; D-ribose 5-phosphate from beta-D-ribopyranose: step 1/2. Its function is as follows. Catalyzes the interconversion of beta-pyran and beta-furan forms of D-ribose. This Thermotoga maritima (strain ATCC 43589 / DSM 3109 / JCM 10099 / NBRC 100826 / MSB8) protein is D-ribose pyranase.